A 265-amino-acid polypeptide reads, in one-letter code: Glutamate racemase (265 aa).

Substrate-binding positions include 12 to 13 (DS) and 44 to 45 (YG). Cys-75 functions as the Proton donor/acceptor in the catalytic mechanism. 76–77 (NT) contacts substrate. Cys-186 acts as the Proton donor/acceptor in catalysis. 187–188 (TH) contributes to the substrate binding site.

This sequence belongs to the aspartate/glutamate racemases family.

It catalyses the reaction L-glutamate = D-glutamate. It participates in cell wall biogenesis; peptidoglycan biosynthesis. In terms of biological role, provides the (R)-glutamate required for cell wall biosynthesis. The sequence is that of Glutamate racemase from Pseudomonas paraeruginosa (strain DSM 24068 / PA7) (Pseudomonas aeruginosa (strain PA7)).